Reading from the N-terminus, the 241-residue chain is Dephospho-CoA kinase CAB5 (241 aa).

In terms of domain architecture, DPCK spans 3 to 211; it reads VVGLTGGIAC…PSKLRTVLEY (209 aa). 8 to 15 serves as a coordination point for ATP; that stretch reads GGIACGKS.

This sequence belongs to the CoaE family.

It localises to the endoplasmic reticulum. The protein localises to the mitochondrion. It is found in the nucleus. The enzyme catalyses 3'-dephospho-CoA + ATP = ADP + CoA + H(+). It functions in the pathway cofactor biosynthesis; coenzyme A biosynthesis; CoA from (R)-pantothenate: step 5/5. Catalyzes the phosphorylation of the 3'-hydroxyl group of dephosphocoenzyme A to form coenzyme A. The sequence is that of Dephospho-CoA kinase CAB5 (CAB5) from Saccharomyces cerevisiae (strain ATCC 204508 / S288c) (Baker's yeast).